Reading from the N-terminus, the 263-residue chain is Aminoglycoside 3'-phosphotransferase (263 aa).

The active-site Proton acceptor is the D189.

This sequence belongs to the aminoglycoside phosphotransferase family.

It carries out the reaction kanamycin A + ATP = kanamycin 3'-phosphate + ADP + H(+). In terms of biological role, resistance to kanamycin and structurally-related aminoglycosides, including amikacin. This Staphylococcus aureus protein is Aminoglycoside 3'-phosphotransferase (aphA).